The sequence spans 1371 residues: DNA-directed RNA polymerase subunit beta (1371 aa).

The protein belongs to the RNA polymerase beta chain family. In terms of assembly, the RNAP catalytic core consists of 2 alpha, 1 beta, 1 beta' and 1 omega subunit. When a sigma factor is associated with the core the holoenzyme is formed, which can initiate transcription.

It catalyses the reaction RNA(n) + a ribonucleoside 5'-triphosphate = RNA(n+1) + diphosphate. In terms of biological role, DNA-dependent RNA polymerase catalyzes the transcription of DNA into RNA using the four ribonucleoside triphosphates as substrates. The chain is DNA-directed RNA polymerase subunit beta from Geobacter sp. (strain M21).